The sequence spans 387 residues: Succinate--CoA ligase [ADP-forming] subunit beta (387 aa).

Residues 9 to 244 enclose the ATP-grasp domain; the sequence is KQLFAEYGIP…KTQEDETEVL (236 aa). ATP-binding positions include Lys46, 53–55, Gly102, and Glu107; that span reads GRG. Residues Asn199 and Asp213 each contribute to the Mg(2+) site. Residues Asn264 and 321-323 contribute to the substrate site; that span reads GIV.

It belongs to the succinate/malate CoA ligase beta subunit family. Heterotetramer of two alpha and two beta subunits. Mg(2+) serves as cofactor.

It catalyses the reaction succinate + ATP + CoA = succinyl-CoA + ADP + phosphate. The catalysed reaction is GTP + succinate + CoA = succinyl-CoA + GDP + phosphate. It functions in the pathway carbohydrate metabolism; tricarboxylic acid cycle; succinate from succinyl-CoA (ligase route): step 1/1. Succinyl-CoA synthetase functions in the citric acid cycle (TCA), coupling the hydrolysis of succinyl-CoA to the synthesis of either ATP or GTP and thus represents the only step of substrate-level phosphorylation in the TCA. The beta subunit provides nucleotide specificity of the enzyme and binds the substrate succinate, while the binding sites for coenzyme A and phosphate are found in the alpha subunit. This Xylella fastidiosa (strain M23) protein is Succinate--CoA ligase [ADP-forming] subunit beta.